The sequence spans 406 residues: RING finger protein PSH1 (406 aa).

The segment at 30-72 adopts an RING-type zinc-finger fold; sequence CSICHDYMFVPMMTPCGHNYCYGCLNTWFASNTQKELACPQCR. 2 positions are modified to phosphoserine: Ser143 and Ser191. A disordered region spans residues 209–406; the sequence is RFASTNPFAN…RVVLGDSDDE (198 aa). Acidic residues-rich tracts occupy residues 223–232, 256–274, and 281–291; these read SSEDDDSSEE, AVDD…EEMD, and IEDDEDDEDED. A Phosphothreonine modification is found at Thr310. Residue Ser403 is modified to Phosphoserine.

As to quaternary structure, interacts with POB3 and SPT16.

Its subcellular location is the nucleus. The protein is RING finger protein PSH1 (PSH1) of Saccharomyces cerevisiae (strain ATCC 204508 / S288c) (Baker's yeast).